We begin with the raw amino-acid sequence, 551 residues long: Glucans biosynthesis protein D (551 aa).

A signal peptide (tat-type signal) is located at residues 1 to 32 (MDRRRFIKGSMAMAAVCGTSGIASLFSQAAFA).

This sequence belongs to the OpgD/OpgG family. In terms of processing, predicted to be exported by the Tat system. The position of the signal peptide cleavage has not been experimentally proven.

It is found in the periplasm. The protein operates within glycan metabolism; osmoregulated periplasmic glucan (OPG) biosynthesis. In terms of biological role, probably involved in the control of the structural glucose backbone of osmoregulated periplasmic glucans (OPGs). The protein is Glucans biosynthesis protein D of Escherichia coli O1:K1 / APEC.